Here is an 81-residue protein sequence, read N- to C-terminus: Sec-independent protein translocase protein TatA (81 aa).

A helical transmembrane segment spans residues 1 to 21; the sequence is MGGISVWQLLIIAVIVVLLFG. A disordered region spans residues 42-81; it reads AMSDEDSAKNEKDADFEPKSLEKQQQKEAAPETKKDKEQA.

The protein belongs to the TatA/E family. The Tat system comprises two distinct complexes: a TatABC complex, containing multiple copies of TatA, TatB and TatC subunits, and a separate TatA complex, containing only TatA subunits. Substrates initially bind to the TatABC complex, which probably triggers association of the separate TatA complex to form the active translocon.

The protein resides in the cell inner membrane. Part of the twin-arginine translocation (Tat) system that transports large folded proteins containing a characteristic twin-arginine motif in their signal peptide across membranes. TatA could form the protein-conducting channel of the Tat system. The sequence is that of Sec-independent protein translocase protein TatA from Vibrio parahaemolyticus serotype O3:K6 (strain RIMD 2210633).